The primary structure comprises 545 residues: T-complex protein 1 subunit alpha (545 aa).

Ser-2 carries the post-translational modification N-acetylserine.

This sequence belongs to the TCP-1 chaperonin family. Heterooligomeric complex of about 850 to 900 kDa that forms two stacked rings, 12 to 16 nm in diameter.

It is found in the cytoplasm. In terms of biological role, molecular chaperone; assists the folding of proteins upon ATP hydrolysis. Known to play a role, in vitro, in the folding of actin and tubulin. The protein is T-complex protein 1 subunit alpha of Arabidopsis thaliana (Mouse-ear cress).